Reading from the N-terminus, the 273-residue chain is 3-methyl-2-oxobutanoate hydroxymethyltransferase 1 (273 aa).

Mg(2+) is bound by residues Asp49 and Asp88. 3-methyl-2-oxobutanoate contacts are provided by residues 49-50, Asp88, and Lys118; that span reads DS. Residue Glu120 participates in Mg(2+) binding. Catalysis depends on Glu187, which acts as the Proton acceptor.

The protein belongs to the PanB family. In terms of assembly, homodecamer; pentamer of dimers. Requires Mg(2+) as cofactor.

The protein localises to the cytoplasm. It carries out the reaction 3-methyl-2-oxobutanoate + (6R)-5,10-methylene-5,6,7,8-tetrahydrofolate + H2O = 2-dehydropantoate + (6S)-5,6,7,8-tetrahydrofolate. Its pathway is cofactor biosynthesis; (R)-pantothenate biosynthesis; (R)-pantoate from 3-methyl-2-oxobutanoate: step 1/2. Functionally, catalyzes the reversible reaction in which hydroxymethyl group from 5,10-methylenetetrahydrofolate is transferred onto alpha-ketoisovalerate to form ketopantoate. The sequence is that of 3-methyl-2-oxobutanoate hydroxymethyltransferase 1 from Pseudomonas aeruginosa (strain UCBPP-PA14).